A 171-amino-acid polypeptide reads, in one-letter code: Translation initiation factor IF-3 (171 aa).

Belongs to the IF-3 family. Monomer.

The protein localises to the cytoplasm. IF-3 binds to the 30S ribosomal subunit and shifts the equilibrium between 70S ribosomes and their 50S and 30S subunits in favor of the free subunits, thus enhancing the availability of 30S subunits on which protein synthesis initiation begins. The polypeptide is Translation initiation factor IF-3 (Halalkalibacterium halodurans (strain ATCC BAA-125 / DSM 18197 / FERM 7344 / JCM 9153 / C-125) (Bacillus halodurans)).